We begin with the raw amino-acid sequence, 270 residues long: 4-hydroxy-tetrahydrodipicolinate reductase (270 aa).

NAD(+) contacts are provided by residues 11-16 (GAGGRM) and Glu37. Arg38 serves as a coordination point for NADP(+). NAD(+) contacts are provided by residues 101–103 (GTT) and 125–128 (APNM). His158 acts as the Proton donor/acceptor in catalysis. His159 contacts (S)-2,3,4,5-tetrahydrodipicolinate. The active-site Proton donor is Lys162. Residue 168–169 (GT) participates in (S)-2,3,4,5-tetrahydrodipicolinate binding.

It belongs to the DapB family.

It localises to the cytoplasm. It catalyses the reaction (S)-2,3,4,5-tetrahydrodipicolinate + NAD(+) + H2O = (2S,4S)-4-hydroxy-2,3,4,5-tetrahydrodipicolinate + NADH + H(+). The enzyme catalyses (S)-2,3,4,5-tetrahydrodipicolinate + NADP(+) + H2O = (2S,4S)-4-hydroxy-2,3,4,5-tetrahydrodipicolinate + NADPH + H(+). It functions in the pathway amino-acid biosynthesis; L-lysine biosynthesis via DAP pathway; (S)-tetrahydrodipicolinate from L-aspartate: step 4/4. Functionally, catalyzes the conversion of 4-hydroxy-tetrahydrodipicolinate (HTPA) to tetrahydrodipicolinate. The chain is 4-hydroxy-tetrahydrodipicolinate reductase from Shewanella baltica (strain OS223).